Reading from the N-terminus, the 329-residue chain is Glyceraldehyde-3-phosphate dehydrogenase 1 (329 aa).

NAD(+) contacts are provided by residues arginine 11 to isoleucine 12, aspartate 33, and lysine 78. D-glyceraldehyde 3-phosphate is bound by residues serine 148 to threonine 150, threonine 179, threonine 208 to glycine 209, and arginine 231. The Nucleophile role is filled by cysteine 149. An NAD(+)-binding site is contributed by asparagine 313.

This sequence belongs to the glyceraldehyde-3-phosphate dehydrogenase family. As to quaternary structure, homotetramer.

The protein localises to the cytoplasm. It carries out the reaction D-glyceraldehyde 3-phosphate + phosphate + NAD(+) = (2R)-3-phospho-glyceroyl phosphate + NADH + H(+). It participates in carbohydrate degradation; glycolysis; pyruvate from D-glyceraldehyde 3-phosphate: step 1/5. This is Glyceraldehyde-3-phosphate dehydrogenase 1 (GAP1) from Kluyveromyces lactis (strain ATCC 8585 / CBS 2359 / DSM 70799 / NBRC 1267 / NRRL Y-1140 / WM37) (Yeast).